The sequence spans 447 residues: Phosphoglucosamine mutase (447 aa).

Ser-103 (phosphoserine intermediate) is an active-site residue. Ser-103, Asp-242, Asp-244, and Asp-246 together coordinate Mg(2+). Ser-103 bears the Phosphoserine mark.

This sequence belongs to the phosphohexose mutase family. Mg(2+) is required as a cofactor. Post-translationally, activated by phosphorylation.

It catalyses the reaction alpha-D-glucosamine 1-phosphate = D-glucosamine 6-phosphate. In terms of biological role, catalyzes the conversion of glucosamine-6-phosphate to glucosamine-1-phosphate. This is Phosphoglucosamine mutase from Jannaschia sp. (strain CCS1).